A 195-amino-acid polypeptide reads, in one-letter code: Acireductone dioxygenase 2 (195 aa).

Positions 94, 96, 100, and 139 each coordinate Fe(2+). Histidine 94, histidine 96, glutamate 100, and histidine 139 together coordinate Ni(2+).

The protein belongs to the acireductone dioxygenase (ARD) family. The cofactor is Fe(2+). Ni(2+) is required as a cofactor.

The protein localises to the cytoplasm. It is found in the nucleus. The catalysed reaction is 1,2-dihydroxy-5-(methylsulfanyl)pent-1-en-3-one + O2 = 4-methylsulfanyl-2-oxobutanoate + formate + 2 H(+). It carries out the reaction 1,2-dihydroxy-5-(methylsulfanyl)pent-1-en-3-one + O2 = 3-(methylsulfanyl)propanoate + CO + formate + 2 H(+). It participates in amino-acid biosynthesis; L-methionine biosynthesis via salvage pathway; L-methionine from S-methyl-5-thio-alpha-D-ribose 1-phosphate: step 5/6. Functionally, catalyzes 2 different reactions between oxygen and the acireductone 1,2-dihydroxy-3-keto-5-methylthiopentene (DHK-MTPene) depending upon the metal bound in the active site. Fe-containing acireductone dioxygenase (Fe-ARD) produces formate and 2-keto-4-methylthiobutyrate (KMTB), the alpha-ketoacid precursor of methionine in the methionine recycle pathway. Ni-containing acireductone dioxygenase (Ni-ARD) produces methylthiopropionate, carbon monoxide and formate, and does not lie on the methionine recycle pathway. The protein is Acireductone dioxygenase 2 of Physcomitrium patens (Spreading-leaved earth moss).